The sequence spans 504 residues: Fumitremorgin C monooxygenase (504 aa).

A helical transmembrane segment spans residues 9-29 (LPYPGVVGASLLVILGIILLF). Heme is bound at residue C442.

This sequence belongs to the cytochrome P450 family. Heme is required as a cofactor.

The protein resides in the membrane. The catalysed reaction is fumitremorgin C + 2 reduced [NADPH--hemoprotein reductase] + 2 O2 = 12alpha,13alpha-dihydroxyfumitremorgin C + 2 oxidized [NADPH--hemoprotein reductase] + 2 H2O + 2 H(+). The protein operates within mycotoxin biosynthesis. Functionally, cytochrome P450 monooxygenase; part of the gene cluster that mediates the biosynthesis of fumitremorgins, indole alkaloids that carry not only intriguing chemical structures, but also interesting biological and pharmacological activities. The biosynthesis of fumitremorgin-type alkaloids begins by condensation of the two amino acids L-tryptophan and L-proline to brevianamide F, catalyzed by the non-ribosomal peptide synthetase ftmPS/ftmA. Brevianamide F is then prenylated by the prenyltransferase ftmPT1/ftmB in the presence of dimethylallyl diphosphate, resulting in the formation of tryprostatin B. The three cytochrome P450 monooxygenases, ftmP450-1/ftmC, ftmP450-2/ftmE and ftmP450-3/FtmG, are responsible for the conversion of tryprostatin B to 6-hydroxytryprostatin B, tryprostatin A to fumitremorgin C and fumitremorgin C to 12,13-dihydroxyfumitremorgin C, respectively. The putative methyltransferase ftmMT/ftmD is expected for the conversion of 6-hydroxytryprostatin B to tryprostatin A. FtmPT2/FtmH catalyzes the prenylation of 12,13-dihydroxyfumitre-morgin C in the presence of dimethylallyl diphosphate, resulting in the formation of fumitremorgin B. Fumitremorgin B is further converted to verruculogen by ftmOx1/ftmF via the insertion of an endoperoxide bond between the two prenyl moieties. Finally, verruculogen is further converted to fumitremorgin A by the verruculogen prenyltransferase ftmPT3. The protein is Fumitremorgin C monooxygenase of Neosartorya fischeri (strain ATCC 1020 / DSM 3700 / CBS 544.65 / FGSC A1164 / JCM 1740 / NRRL 181 / WB 181) (Aspergillus fischerianus).